A 186-amino-acid chain; its full sequence is Large ribosomal subunit protein uL5 (186 aa).

Belongs to the universal ribosomal protein uL5 family. As to quaternary structure, part of the 50S ribosomal subunit; part of the 5S rRNA/L5/L18/L25 subcomplex. Contacts the 5S rRNA and the P site tRNA. Forms a bridge to the 30S subunit in the 70S ribosome.

Functionally, this is one of the proteins that bind and probably mediate the attachment of the 5S RNA into the large ribosomal subunit, where it forms part of the central protuberance. In the 70S ribosome it contacts protein S13 of the 30S subunit (bridge B1b), connecting the 2 subunits; this bridge is implicated in subunit movement. Contacts the P site tRNA; the 5S rRNA and some of its associated proteins might help stabilize positioning of ribosome-bound tRNAs. The sequence is that of Large ribosomal subunit protein uL5 from Cereibacter sphaeroides (strain ATCC 17023 / DSM 158 / JCM 6121 / CCUG 31486 / LMG 2827 / NBRC 12203 / NCIMB 8253 / ATH 2.4.1.) (Rhodobacter sphaeroides).